The primary structure comprises 251 residues: Zinc import ATP-binding protein ZnuC (251 aa).

Residues 5 to 220 form the ABC transporter domain; sequence VSLENVSVSF…PEFISMFGPR (216 aa). 37–44 lines the ATP pocket; the sequence is GPNGAGKS.

It belongs to the ABC transporter superfamily. Zinc importer (TC 3.A.1.15.5) family. As to quaternary structure, the complex is composed of two ATP-binding proteins (ZnuC), two transmembrane proteins (ZnuB) and a solute-binding protein (ZnuA).

It localises to the cell inner membrane. The enzyme catalyses Zn(2+)(out) + ATP(in) + H2O(in) = Zn(2+)(in) + ADP(in) + phosphate(in) + H(+)(in). Functionally, part of the ABC transporter complex ZnuABC involved in zinc import. Responsible for energy coupling to the transport system. In Escherichia coli O157:H7, this protein is Zinc import ATP-binding protein ZnuC.